The chain runs to 154 residues: Large ribosomal subunit protein uL30 (154 aa).

This sequence belongs to the universal ribosomal protein uL30 family. Part of the 50S ribosomal subunit.

The chain is Large ribosomal subunit protein uL30 from Methanococcus maripaludis (strain C5 / ATCC BAA-1333).